A 205-amino-acid polypeptide reads, in one-letter code: N-(5'-phosphoribosyl)anthranilate isomerase (205 aa).

The protein belongs to the TrpF family.

The catalysed reaction is N-(5-phospho-beta-D-ribosyl)anthranilate = 1-(2-carboxyphenylamino)-1-deoxy-D-ribulose 5-phosphate. The protein operates within amino-acid biosynthesis; L-tryptophan biosynthesis; L-tryptophan from chorismate: step 3/5. The protein is N-(5'-phosphoribosyl)anthranilate isomerase of Acidithiobacillus ferrooxidans (strain ATCC 23270 / DSM 14882 / CIP 104768 / NCIMB 8455) (Ferrobacillus ferrooxidans (strain ATCC 23270)).